Consider the following 344-residue polypeptide: tRNA N6-adenosine threonylcarbamoyltransferase (344 aa).

The Fe cation site is built by His-110 and His-114. Substrate contacts are provided by residues Ala-133–Ala-137, Asp-166, Gly-179, and Asn-278. Residue Asp-303 coordinates Fe cation.

This sequence belongs to the KAE1 / TsaD family. Fe(2+) serves as cofactor.

The protein resides in the cytoplasm. It carries out the reaction L-threonylcarbamoyladenylate + adenosine(37) in tRNA = N(6)-L-threonylcarbamoyladenosine(37) in tRNA + AMP + H(+). Its function is as follows. Required for the formation of a threonylcarbamoyl group on adenosine at position 37 (t(6)A37) in tRNAs that read codons beginning with adenine. Is involved in the transfer of the threonylcarbamoyl moiety of threonylcarbamoyl-AMP (TC-AMP) to the N6 group of A37, together with TsaE and TsaB. TsaD likely plays a direct catalytic role in this reaction. In Chlamydia caviae (strain ATCC VR-813 / DSM 19441 / 03DC25 / GPIC) (Chlamydophila caviae), this protein is tRNA N6-adenosine threonylcarbamoyltransferase.